Here is a 301-residue protein sequence, read N- to C-terminus: NAD kinase (301 aa).

Aspartate 84 serves as the catalytic Proton acceptor. Residues 84-85, arginine 89, 158-159, lysine 169, asparagine 188, 199-204, and glutamine 258 each bind NAD(+); these read DG, NE, and TAYSFS.

This sequence belongs to the NAD kinase family. The cofactor is a divalent metal cation.

It is found in the cytoplasm. It catalyses the reaction NAD(+) + ATP = ADP + NADP(+) + H(+). Its function is as follows. Involved in the regulation of the intracellular balance of NAD and NADP, and is a key enzyme in the biosynthesis of NADP. Catalyzes specifically the phosphorylation on 2'-hydroxyl of the adenosine moiety of NAD to yield NADP. This chain is NAD kinase, found in Tropheryma whipplei (strain Twist) (Whipple's bacillus).